The following is a 211-amino-acid chain: Large ribosomal subunit protein uL4 (211 aa).

Residues 44-90 (ERQGTHSTLTKGEVRGGGKKPWRQKHTGKARTGSTRNPHWTGGGVVF) are disordered. Residues 60-72 (GGKKPWRQKHTGK) show a composition bias toward basic residues.

It belongs to the universal ribosomal protein uL4 family. Part of the 50S ribosomal subunit.

In terms of biological role, one of the primary rRNA binding proteins, this protein initially binds near the 5'-end of the 23S rRNA. It is important during the early stages of 50S assembly. It makes multiple contacts with different domains of the 23S rRNA in the assembled 50S subunit and ribosome. Functionally, forms part of the polypeptide exit tunnel. This is Large ribosomal subunit protein uL4 from Ureaplasma urealyticum serovar 10 (strain ATCC 33699 / Western).